The chain runs to 423 residues: Endochitinase 42 (423 aa).

Residues 1-22 form the signal peptide; it reads MLSFLGKSVALLAALQATLSSP. The propeptide occupies 23 to 34; it reads KPGHRRASVEKR. Positions 38-401 constitute a GH18 domain; the sequence is YANSVYFTNW…GTSHRALGGL (364 aa). Chitin-binding positions include 102-103 and 129-132; these read GT and GGWT. E171 serves as the catalytic Proton donor. Y172 serves as a coordination point for chitin. N-linked (GlcNAc...) asparagine glycosylation occurs at N218. Chitin is bound by residues 237–240 and W378; that span reads MAYD.

It belongs to the glycosyl hydrolase 18 family. Chitinase class V subfamily.

The protein localises to the secreted. The catalysed reaction is Random endo-hydrolysis of N-acetyl-beta-D-glucosaminide (1-&gt;4)-beta-linkages in chitin and chitodextrins.. Functionally, secreted chitinase involved in the degradation of chitin, a component of the cell walls of fungi and exoskeletal elements of some animals (including worms and arthropods). Plays a morphogenetic role during apical growth, cell division and differentiation (cell wall morphogenesis). Also acts as an antifungal agent. Involved in the degradation and further assimilation of phytopathogenic fungi, namely mycoparasitism, the major mechanism accounting for the antagonistic activity against phytopathogenic fungi displayed by Trichoderma. The protein is Endochitinase 42 (chit42) of Trichoderma harzianum (Hypocrea lixii).